A 206-amino-acid polypeptide reads, in one-letter code: Thiamine-phosphate synthase (206 aa).

4-amino-2-methyl-5-(diphosphooxymethyl)pyrimidine is bound by residues 39–43 and Asn74; that span reads QYREK. 2 residues coordinate Mg(2+): Asp75 and Asp94. 4-amino-2-methyl-5-(diphosphooxymethyl)pyrimidine is bound at residue Ser112. Residue 138-140 coordinates 2-[(2R,5Z)-2-carboxy-4-methylthiazol-5(2H)-ylidene]ethyl phosphate; the sequence is TNT. Lys141 serves as a coordination point for 4-amino-2-methyl-5-(diphosphooxymethyl)pyrimidine. 2-[(2R,5Z)-2-carboxy-4-methylthiazol-5(2H)-ylidene]ethyl phosphate-binding positions include Gly170 and 190–191; that span reads IS.

It belongs to the thiamine-phosphate synthase family. Mg(2+) serves as cofactor.

The catalysed reaction is 2-[(2R,5Z)-2-carboxy-4-methylthiazol-5(2H)-ylidene]ethyl phosphate + 4-amino-2-methyl-5-(diphosphooxymethyl)pyrimidine + 2 H(+) = thiamine phosphate + CO2 + diphosphate. It catalyses the reaction 2-(2-carboxy-4-methylthiazol-5-yl)ethyl phosphate + 4-amino-2-methyl-5-(diphosphooxymethyl)pyrimidine + 2 H(+) = thiamine phosphate + CO2 + diphosphate. The enzyme catalyses 4-methyl-5-(2-phosphooxyethyl)-thiazole + 4-amino-2-methyl-5-(diphosphooxymethyl)pyrimidine + H(+) = thiamine phosphate + diphosphate. It participates in cofactor biosynthesis; thiamine diphosphate biosynthesis; thiamine phosphate from 4-amino-2-methyl-5-diphosphomethylpyrimidine and 4-methyl-5-(2-phosphoethyl)-thiazole: step 1/1. Its function is as follows. Condenses 4-methyl-5-(beta-hydroxyethyl)thiazole monophosphate (THZ-P) and 2-methyl-4-amino-5-hydroxymethyl pyrimidine pyrophosphate (HMP-PP) to form thiamine monophosphate (TMP). The protein is Thiamine-phosphate synthase of Oceanobacillus iheyensis (strain DSM 14371 / CIP 107618 / JCM 11309 / KCTC 3954 / HTE831).